Reading from the N-terminus, the 301-residue chain is tRNA pseudouridine synthase B (301 aa).

Catalysis depends on D48, which acts as the Nucleophile.

Belongs to the pseudouridine synthase TruB family. Type 1 subfamily.

The catalysed reaction is uridine(55) in tRNA = pseudouridine(55) in tRNA. Its function is as follows. Responsible for synthesis of pseudouridine from uracil-55 in the psi GC loop of transfer RNAs. This is tRNA pseudouridine synthase B from Mycobacterium ulcerans (strain Agy99).